The following is a 366-amino-acid chain: MLIWLVELSDKVQLFNLFRYITFRAGAAMFTSALIVFLFGPAIINSLRVRQGKGQPIRADGPQTHFKKAGTPTMGGLMILAGILGGSLLWGDLSNVYVVAVLMVTLGFGAIGFYDDYLKVTKQSDKGFSGKARLGIEFLIAAIAVFFMMKMALASAPHGGTLGSSIAFPFFKEFVINLGYFFVLFGAFVIVGAGNAVNLTDGLDGLAIVPVMIAAATFGVIAYLAGNAVFANYLQINFVPGTGELAVIVGAVIGAGLGFLWFNAPPAAIFMGDTGSLALGGLIGSIAVATKHEIVMVIVGGLFVMETLSVIIQVFWFKRTGRRVFLMAPIHHHFEKKGWTESQVVIRFWIISVGLALLGLATLKLR.

Transmembrane regions (helical) follow at residues 25–45, 70–90, 93–113, 134–154, 174–194, 205–225, 245–265, 268–288, 297–317, and 343–363; these read AGAA…AIIN, GTPT…SLLW, LSNV…AIGF, LGIE…MALA, FVIN…VGAG, GLAI…AYLA, LAVI…FNAP, AIFM…SIAV, VIVG…VFWF, and QVVI…LATL.

This sequence belongs to the glycosyltransferase 4 family. MraY subfamily. The cofactor is Mg(2+).

The protein resides in the cell inner membrane. It carries out the reaction UDP-N-acetyl-alpha-D-muramoyl-L-alanyl-gamma-D-glutamyl-meso-2,6-diaminopimeloyl-D-alanyl-D-alanine + di-trans,octa-cis-undecaprenyl phosphate = di-trans,octa-cis-undecaprenyl diphospho-N-acetyl-alpha-D-muramoyl-L-alanyl-D-glutamyl-meso-2,6-diaminopimeloyl-D-alanyl-D-alanine + UMP. Its pathway is cell wall biogenesis; peptidoglycan biosynthesis. Its function is as follows. Catalyzes the initial step of the lipid cycle reactions in the biosynthesis of the cell wall peptidoglycan: transfers peptidoglycan precursor phospho-MurNAc-pentapeptide from UDP-MurNAc-pentapeptide onto the lipid carrier undecaprenyl phosphate, yielding undecaprenyl-pyrophosphoryl-MurNAc-pentapeptide, known as lipid I. The polypeptide is Phospho-N-acetylmuramoyl-pentapeptide-transferase (Agrobacterium fabrum (strain C58 / ATCC 33970) (Agrobacterium tumefaciens (strain C58))).